Consider the following 796-residue polypeptide: YY1-associated protein 1 (796 aa).

Disordered stretches follow at residues 1–45 (MEEE…ATPS) and 463–488 (IQPSPSLQPSFNPGKTPAQSTHSEAP). Residues 23 to 36 (PPDKREGSAVDPGK) show a composition bias toward basic and acidic residues. Residues 463-472 (IQPSPSLQPS) show a composition bias toward low complexity. Residues 473–485 (FNPGKTPAQSTHS) show a composition bias toward polar residues. The residue at position 724 (Ser724) is a Phosphoserine. The segment at 755 to 776 (RQALEPLPQGIQESLNNSSPGD) is disordered. Over residues 765-774 (IQESLNNSSP) the composition is skewed to polar residues.

In terms of assembly, interacts with YY1. Interacts with MAD2L2. Interacts with INO80. Ubiquitous. Detected in small intestine, skeletal muscle, lung, pancreas, brain, stomach, spleen, colon and heart. Detected at very low levels in healthy liver. Highly expressed in most liver carcinomas.

The protein localises to the cytoplasm. The protein resides in the nucleus. It localises to the nucleoplasm. It is found in the nucleolus. In terms of biological role, associates with the INO80 chromatin remodeling complex, which is responsible for transcriptional regulation, DNA repair, and replication. Enhances transcription activation by YY1. Plays a role in cell cycle regulation. The chain is YY1-associated protein 1 from Homo sapiens (Human).